Here is a 273-residue protein sequence, read N- to C-terminus: Arginine and glutamate-rich protein 1 (273 aa).

Composition is skewed to basic residues over residues 1–29 (MGRS…RSRS) and 37–58 (VRKR…RSRS). Positions 1-74 (MGRSRSRSSS…VSRRERDRER (74 aa)) are necessary and sufficient for RNA binding. The segment at 1–113 (MGRSRSRSSS…EEKKAEFERQ (113 aa)) is disordered. Residues S58 and S60 each carry the phosphoserine modification. T61 carries the phosphothreonine modification. 2 stretches are compositionally biased toward basic and acidic residues: residues 66–84 (SRRE…RIDI) and 93–113 (SSLD…FERQ). The tract at residues 75–273 (ASSPPDRIDI…KLSFSLKTQD (199 aa)) is necessary and sufficient for transcriptional regulation. Phosphoserine is present on residues S76 and S77. Residues 172-176 (LLEEL) carry the LXXLL motif 1; degenerate motif. The short motif at 201–205 (LERIL) is the LXXLL motif 2; degenerate element. The segment covering 238 to 253 (MKLEQERQRQQKEEQK) has biased composition (basic and acidic residues). Positions 238–273 (MKLEQERQRQQKEEQKIILGKGKSRPKLSFSLKTQD) are disordered. S266 is modified (phosphoserine).

This sequence belongs to the ARGLU1 family. As to quaternary structure, interacts with MED1; the interaction is direct. Interacts with PUF60, U2AF2 and JMJD6; may interact with other proteins involved in RNA processing and splicing.

The protein localises to the nucleus. It is found in the nucleus speckle. It localises to the chromosome. Its function is as follows. Dual function regulator of gene expression; regulator of transcription and modulator of alternative splicing. General coactivator of nuclear receptor-induced gene expression, including genes activated by the glucocorticoid receptor NR3C1. Binds to a subset of pre-mRNAs and to components of the spliceosome machinery to directly modulate basal alternative splicing; involved in simple and complex cassette exon splicing events. Binds its own pre-mRNA and regulates its alternative splicing and degradation; one of the alternatively spliced products is a stable intronic sequence RNA (sisRNA) that binds the protein to regulate its ability to affect splicing. Binding of the sisRNA stimulates phase separation and localization to nuclear speckles, which may contribute to activation of nuclear receptor-induced gene expression. May also indirectly modulate alternative splicing. Regulates transcription of genes involved in heart development, neuronal cell function, protein localization and chromatin localization. Regulates splicing of genes involved in neurogenesis and chromatin organization. Essential for central nervous system development. Required for the estrogen-dependent expression of ESR1 target genes. Can act in cooperation with MED1. The chain is Arginine and glutamate-rich protein 1 (ARGLU1) from Bos taurus (Bovine).